We begin with the raw amino-acid sequence, 340 residues long: Ketol-acid reductoisomerase (NADP(+)) (340 aa).

One can recognise a KARI N-terminal Rossmann domain in the interval 3–182 (VQMEYEKDVK…GAARVGLLET (180 aa)). NADP(+) contacts are provided by residues 26 to 29 (YGSQ), Arg49, Ser53, and 83 to 86 (DEIQ). His108 is a catalytic residue. Gly134 is a binding site for NADP(+). Residues 183-328 (TYKEETEEDL…AELRKAMPFV (146 aa)) enclose the KARI C-terminal knotted domain. Positions 191, 195, 227, and 231 each coordinate Mg(2+). Ser252 provides a ligand contact to substrate.

Belongs to the ketol-acid reductoisomerase family. It depends on Mg(2+) as a cofactor.

It carries out the reaction (2R)-2,3-dihydroxy-3-methylbutanoate + NADP(+) = (2S)-2-acetolactate + NADPH + H(+). It catalyses the reaction (2R,3R)-2,3-dihydroxy-3-methylpentanoate + NADP(+) = (S)-2-ethyl-2-hydroxy-3-oxobutanoate + NADPH + H(+). It functions in the pathway amino-acid biosynthesis; L-isoleucine biosynthesis; L-isoleucine from 2-oxobutanoate: step 2/4. Its pathway is amino-acid biosynthesis; L-valine biosynthesis; L-valine from pyruvate: step 2/4. Involved in the biosynthesis of branched-chain amino acids (BCAA). Catalyzes an alkyl-migration followed by a ketol-acid reduction of (S)-2-acetolactate (S2AL) to yield (R)-2,3-dihydroxy-isovalerate. In the isomerase reaction, S2AL is rearranged via a Mg-dependent methyl migration to produce 3-hydroxy-3-methyl-2-ketobutyrate (HMKB). In the reductase reaction, this 2-ketoacid undergoes a metal-dependent reduction by NADPH to yield (R)-2,3-dihydroxy-isovalerate. This Streptococcus pneumoniae (strain CGSP14) protein is Ketol-acid reductoisomerase (NADP(+)).